Here is a 349-residue protein sequence, read N- to C-terminus: Phosphoribosylformylglycinamidine cyclo-ligase (349 aa).

This sequence belongs to the AIR synthase family.

The protein localises to the cytoplasm. The enzyme catalyses 2-formamido-N(1)-(5-O-phospho-beta-D-ribosyl)acetamidine + ATP = 5-amino-1-(5-phospho-beta-D-ribosyl)imidazole + ADP + phosphate + H(+). The protein operates within purine metabolism; IMP biosynthesis via de novo pathway; 5-amino-1-(5-phospho-D-ribosyl)imidazole from N(2)-formyl-N(1)-(5-phospho-D-ribosyl)glycinamide: step 2/2. This chain is Phosphoribosylformylglycinamidine cyclo-ligase, found in Methanococcus maripaludis (strain C7 / ATCC BAA-1331).